Consider the following 143-residue polypeptide: Hemoglobin subunit alpha-2 (143 aa).

Ser2 carries the post-translational modification N-acetylserine. Positions 2-143 (SLSSKDKATV…LALALSEKYR (142 aa)) constitute a Globin domain. His60 is an O2 binding site. His89 provides a ligand contact to heme b.

Belongs to the globin family. In terms of assembly, hb 2 is a heterotetramer of two alpha-2 and two beta-1 chains. Hb 3 is a heterotetramer of two alpha-2 and two beta-2 chains. In terms of tissue distribution, red blood cells.

In terms of biological role, involved in oxygen transport from gills to the various peripheral tissues. This chain is Hemoglobin subunit alpha-2 (hba2), found in Arctogadus glacialis (Arctic cod).